The sequence spans 318 residues: Ubiquitin-like domain-containing CTD phosphatase 1 (318 aa).

The Ubiquitin-like domain occupies 3–81; it reads LPIIVKWGGQ…IMMMGTREES (79 aa). An N6-acetyllysine modification is found at Lys-117. Positions 133-294 constitute an FCP1 homology domain; the sequence is PREGKKLLVL…VKLTQYLKEI (162 aa). Mg(2+) contacts are provided by Asp-143, Asp-145, and Asp-253.

It depends on Mg(2+) as a cofactor.

It is found in the nucleus. The catalysed reaction is O-phospho-L-seryl-[protein] + H2O = L-seryl-[protein] + phosphate. It catalyses the reaction O-phospho-L-threonyl-[protein] + H2O = L-threonyl-[protein] + phosphate. In terms of biological role, dephosphorylates 26S nuclear proteasomes, thereby decreasing their proteolytic activity. Recruited to the 19S regulatory particle of the 26S proteasome through its interaction with 19S component PSMD2/RPN1. Once recruited, dephosphorylates 19S component PSMC2/RPT1 which impairs PSMC2 ATPase activity and disrupts 26S proteasome assembly. Has also been reported to stimulate the proteolytic activity of the 26S proteasome. In Rattus norvegicus (Rat), this protein is Ubiquitin-like domain-containing CTD phosphatase 1 (Ublcp1).